The chain runs to 500 residues: Aspartyl/glutamyl-tRNA(Asn/Gln) amidotransferase subunit B (500 aa).

Belongs to the GatB/GatE family. GatB subfamily. In terms of assembly, heterotrimer of A, B and C subunits.

The enzyme catalyses L-glutamyl-tRNA(Gln) + L-glutamine + ATP + H2O = L-glutaminyl-tRNA(Gln) + L-glutamate + ADP + phosphate + H(+). It catalyses the reaction L-aspartyl-tRNA(Asn) + L-glutamine + ATP + H2O = L-asparaginyl-tRNA(Asn) + L-glutamate + ADP + phosphate + 2 H(+). Functionally, allows the formation of correctly charged Asn-tRNA(Asn) or Gln-tRNA(Gln) through the transamidation of misacylated Asp-tRNA(Asn) or Glu-tRNA(Gln) in organisms which lack either or both of asparaginyl-tRNA or glutaminyl-tRNA synthetases. The reaction takes place in the presence of glutamine and ATP through an activated phospho-Asp-tRNA(Asn) or phospho-Glu-tRNA(Gln). In Rhizobium meliloti (strain 1021) (Ensifer meliloti), this protein is Aspartyl/glutamyl-tRNA(Asn/Gln) amidotransferase subunit B.